Here is a 168-residue protein sequence, read N- to C-terminus: uncharacterized protein (168 aa).

A helical transmembrane segment spans residues 24–44; the sequence is FIGIVLFLAVLIIGILILILF. Disordered regions lie at residues 69–92 and 142–168; these read SPSS…NNSN and NNNN…TKNI. A compositionally biased stretch (low complexity) spans 142–157; sequence NNNNNNNNNPPTNISN.

The protein localises to the membrane. This is an uncharacterized protein from Dictyostelium discoideum (Social amoeba).